Consider the following 398-residue polypeptide: Acetate kinase 1 (398 aa).

A Mg(2+)-binding site is contributed by Asn9. Lys16 lines the ATP pocket. Arg89 lines the substrate pocket. Asp146 functions as the Proton donor/acceptor in the catalytic mechanism. ATP-binding positions include 206-210, 281-283, and 329-333; these read HLGNG, DCR, and GIGEN. A Mg(2+)-binding site is contributed by Glu384.

Belongs to the acetokinase family. In terms of assembly, homodimer. The cofactor is Mg(2+). It depends on Mn(2+) as a cofactor.

It localises to the cytoplasm. The catalysed reaction is acetate + ATP = acetyl phosphate + ADP. It participates in metabolic intermediate biosynthesis; acetyl-CoA biosynthesis; acetyl-CoA from acetate: step 1/2. Functionally, catalyzes the formation of acetyl phosphate from acetate and ATP. Can also catalyze the reverse reaction. In Photobacterium profundum (strain SS9), this protein is Acetate kinase 1.